The following is a 328-amino-acid chain: Phosphate acyltransferase (328 aa).

The protein belongs to the PlsX family. In terms of assembly, homodimer. Probably interacts with PlsY.

Its subcellular location is the cytoplasm. It catalyses the reaction a fatty acyl-[ACP] + phosphate = an acyl phosphate + holo-[ACP]. It functions in the pathway lipid metabolism; phospholipid metabolism. In terms of biological role, catalyzes the reversible formation of acyl-phosphate (acyl-PO(4)) from acyl-[acyl-carrier-protein] (acyl-ACP). This enzyme utilizes acyl-ACP as fatty acyl donor, but not acyl-CoA. This is Phosphate acyltransferase from Staphylococcus haemolyticus (strain JCSC1435).